Reading from the N-terminus, the 268-residue chain is Nickel import ATP-binding protein NikE (268 aa).

The region spanning 4–252 (LNVCGLSHHY…SSDAGRVLQN (249 aa)) is the ABC transporter domain. 45-52 (GRSGCGKS) is a binding site for ATP.

Belongs to the ABC transporter superfamily. Nickel importer (TC 3.A.1.5.3) family. In terms of assembly, the complex is composed of two ATP-binding proteins (NikD and NikE), two transmembrane proteins (NikB and NikC) and a solute-binding protein (NikA).

It is found in the cell inner membrane. It carries out the reaction Ni(2+)(out) + ATP + H2O = Ni(2+)(in) + ADP + phosphate + H(+). Its function is as follows. Part of the ABC transporter complex NikABCDE involved in nickel import. Responsible for energy coupling to the transport system. In Shigella flexneri serotype 5b (strain 8401), this protein is Nickel import ATP-binding protein NikE.